A 385-amino-acid chain; its full sequence is Cytochrome b (385 aa).

A run of 4 helical transmembrane segments spans residues 32 to 52 (FGSL…TLAM), 76 to 98 (WLVR…LHIG), 113 to 133 (TWAI…LGYV), and 179 to 199 (FFAL…MHLI). 2 residues coordinate heme b: histidine 82 and histidine 96. Histidine 183 and histidine 197 together coordinate heme b. An a ubiquinone-binding site is contributed by histidine 202. 4 consecutive transmembrane segments (helical) span residues 226–246 (FIFK…IFVF), 290–310 (LLGV…PITD), 322–342 (LSKV…QIGA), and 349–369 (FIEL…VIVP).

Belongs to the cytochrome b family. As to quaternary structure, fungal cytochrome b-c1 complex contains 10 subunits; 3 respiratory subunits, 2 core proteins and 5 low-molecular weight proteins. Cytochrome b-c1 complex is a homodimer. Heme b serves as cofactor.

It localises to the mitochondrion inner membrane. Functionally, component of the ubiquinol-cytochrome c reductase complex (complex III or cytochrome b-c1 complex) that is part of the mitochondrial respiratory chain. The b-c1 complex mediates electron transfer from ubiquinol to cytochrome c. Contributes to the generation of a proton gradient across the mitochondrial membrane that is then used for ATP synthesis. The sequence is that of Cytochrome b (cob) from Aspergillus tubingensis.